Consider the following 325-residue polypeptide: MSGGLEVLSMKEDDVTKLLAAGTHLGDSNVDIQMAQYVFKTKGDGVPIINVRKTWEKLLLAARVIAAIENPADVCVLANKPFGQRAILKFAHYTGAFPIAGRFTPGTFTNQIQKAFREPRLLIVSDARSDHQPITEAAYVNIPVIAFCNTNSPLRYIDVAIPCNNMGKNSLGLMWWLLCREVLRLRGTISRELPWEVMPDLFFYRDPEEVEKEEQAKAEAERERLATDQWQTNQPAAPQQDPDQWADTMGVPSGGDWGDEPVTTAPVPTGGAPPVASTTATPATNTGSGFNQDDWSVPTTKTKDWGADDGGEWGNTEPKASTGNW.

Over residues 212–226 (KEEQAKAEAERERLA) the composition is skewed to basic and acidic residues. The tract at residues 212 to 325 (KEEQAKAEAE…TEPKASTGNW (114 aa)) is disordered. Composition is skewed to low complexity over residues 234 to 247 (QPAA…QWAD) and 261 to 289 (PVTT…TGSG). Positions 290–300 (FNQDDWSVPTT) are enriched in polar residues.

Belongs to the universal ribosomal protein uS2 family. In terms of assembly, component of the small ribosomal subunit. Mature ribosomes consist of a small (40S) and a large (60S) subunit. The 40S subunit contains about 33 different proteins and 1 molecule of RNA (18S). The 60S subunit contains about 49 different proteins and 3 molecules of RNA (28S, 5.8S and 5S). Interacts with ribosomal protein S21.

It is found in the cytoplasm. Required for the assembly and/or stability of the 40S ribosomal subunit. Required for the processing of the 20S rRNA-precursor to mature 18S rRNA in a late step of the maturation of 40S ribosomal subunits. This is Small ribosomal subunit protein uS2 from Suberites domuncula (Sponge).